Here is a 228-residue protein sequence, read N- to C-terminus: Ribonuclease 3 (228 aa).

In terms of domain architecture, RNase III spans 5 to 128 (LNRLMARLGY…IIGAMLLDGG (124 aa)). Residue Glu41 participates in Mg(2+) binding. Asp45 is an active-site residue. Asp114 and Glu117 together coordinate Mg(2+). Glu117 is a catalytic residue. The region spanning 155–225 (DAKTRLQEWL…ASLALEWLEQ (71 aa)) is the DRBM domain.

It belongs to the ribonuclease III family. In terms of assembly, homodimer. Mg(2+) serves as cofactor.

It is found in the cytoplasm. It catalyses the reaction Endonucleolytic cleavage to 5'-phosphomonoester.. In terms of biological role, digests double-stranded RNA. Involved in the processing of primary rRNA transcript to yield the immediate precursors to the large and small rRNAs (23S and 16S). Processes some mRNAs, and tRNAs when they are encoded in the rRNA operon. Processes pre-crRNA and tracrRNA of type II CRISPR loci if present in the organism. In Alcanivorax borkumensis (strain ATCC 700651 / DSM 11573 / NCIMB 13689 / SK2), this protein is Ribonuclease 3.